The sequence spans 254 residues: MAIANKNIIFVAGLGGIGLDTSREIVKSGPKNLVILDRIDNPTAIAELKAINPKVTVTFYPYDVTVPVAETTKLLKTIFAQLKTVDLLINGAGILDDHQIERTIAVNFTGTVNTTTAIMEFWDKRKGGPGGVIANICSVTGFNAIYQVPVYSASKAAALSFTNSLARLAPITGVTAYSINPGITRTPLVHRFNSWLDVEPRVGELLLEHPTQTTLECAQNFVKAIEANKNGAIWQLDLGQLIAVEWTKHWDSHI.

Residue 10-33 coordinates NAD(+); the sequence is FVAGLGGIGLDTSREIVKSGPKNL. Serine 138 contributes to the substrate binding site. The active-site Proton acceptor is tyrosine 151.

The protein belongs to the short-chain dehydrogenases/reductases (SDR) family. As to quaternary structure, homodimer.

It carries out the reaction a primary alcohol + NAD(+) = an aldehyde + NADH + H(+). The enzyme catalyses a secondary alcohol + NAD(+) = a ketone + NADH + H(+). This chain is Alcohol dehydrogenase (Adh), found in Drosophila flavomontana (Fruit fly).